A 529-amino-acid chain; its full sequence is Ribonuclease Y (529 aa).

Residues 4-24 (GLIYISLEVLVACLITALIMY) traverse the membrane as a helical segment. A KH domain is found at 216–297 (LTSRIALPCS…NRIEEVYHRV (82 aa)). An HD domain is found at 342 to 435 (ALQHSKEVAL…VCAADALSAG (94 aa)).

The protein belongs to the RNase Y family.

Its subcellular location is the cell membrane. In terms of biological role, endoribonuclease that initiates mRNA decay. The chain is Ribonuclease Y from Helicobacter pylori (strain J99 / ATCC 700824) (Campylobacter pylori J99).